The primary structure comprises 215 residues: Probable transaldolase (215 aa).

Lys-84 (schiff-base intermediate with substrate) is an active-site residue.

It belongs to the transaldolase family. Type 3B subfamily.

It localises to the cytoplasm. The catalysed reaction is D-sedoheptulose 7-phosphate + D-glyceraldehyde 3-phosphate = D-erythrose 4-phosphate + beta-D-fructose 6-phosphate. It functions in the pathway carbohydrate degradation; pentose phosphate pathway; D-glyceraldehyde 3-phosphate and beta-D-fructose 6-phosphate from D-ribose 5-phosphate and D-xylulose 5-phosphate (non-oxidative stage): step 2/3. Functionally, transaldolase is important for the balance of metabolites in the pentose-phosphate pathway. The protein is Probable transaldolase of Exiguobacterium sibiricum (strain DSM 17290 / CCUG 55495 / CIP 109462 / JCM 13490 / 255-15).